Consider the following 481-residue polypeptide: Glutamate--tRNA ligase (481 aa).

A 'HIGH' region motif is present at residues 11-21 (PSPTGLLHIGN). The 'KMSKS' region motif lies at 255–259 (KLSKR). Lys-258 is a binding site for ATP.

The protein belongs to the class-I aminoacyl-tRNA synthetase family. Glutamate--tRNA ligase type 1 subfamily. As to quaternary structure, monomer.

The protein resides in the cytoplasm. The catalysed reaction is tRNA(Glu) + L-glutamate + ATP = L-glutamyl-tRNA(Glu) + AMP + diphosphate. Its function is as follows. Catalyzes the attachment of glutamate to tRNA(Glu) in a two-step reaction: glutamate is first activated by ATP to form Glu-AMP and then transferred to the acceptor end of tRNA(Glu). The sequence is that of Glutamate--tRNA ligase from Streptococcus pyogenes serotype M3 (strain ATCC BAA-595 / MGAS315).